The primary structure comprises 589 residues: Early growth response protein 4 (589 aa).

3 disordered regions span residues 29–101 (GSAL…HSRR), 383–411 (AEGL…ASTQ), and 436–466 (PGSS…GRRG). The span at 76 to 86 (PLPPASPPPAR) shows a compositional bias: pro residues. Residues 92–101 (ARPRAPHSRR) show a composition bias toward basic residues. Over residues 395–404 (GEGGSSGDGG) the composition is skewed to gly residues. Residues 444-454 (PPVPPPPPTPF) show a composition bias toward pro residues. C2H2-type zinc fingers lie at residues 483–507 (FACP…LRIH), 513–535 (FQCR…VRTH), and 541–563 (FACD…SKVH).

Belongs to the EGR C2H2-type zinc-finger protein family.

Its subcellular location is the nucleus. Functionally, transcriptional regulator. Recognizes and binds to the DNA sequence 5'-GCGGGGGCG-3' (GSG). Activates the transcription of target genes whose products are required for mitogenesis and differentiation. The protein is Early growth response protein 4 (EGR4) of Homo sapiens (Human).